A 403-amino-acid polypeptide reads, in one-letter code: Creatinase (403 aa).

Residue H232 is part of the active site.

Belongs to the peptidase M24 family. Creatinase subfamily. In terms of assembly, homodimer.

The catalysed reaction is creatine + H2O = sarcosine + urea. The chain is Creatinase from Pseudomonas putida (Arthrobacter siderocapsulatus).